The sequence spans 527 residues: Phosphoenolpyruvate carboxykinase (ATP) (527 aa).

Residues arginine 55, tyrosine 191, and lysine 197 each coordinate substrate. ATP is bound by residues lysine 197, histidine 216, and 232-240 (GLSGTGKTT). Mn(2+)-binding residues include lysine 197 and histidine 216. Aspartate 253 contributes to the Mn(2+) binding site. ATP contacts are provided by glutamate 281, arginine 318, and threonine 443. Arginine 318 is a substrate binding site.

This sequence belongs to the phosphoenolpyruvate carboxykinase (ATP) family. Requires Mn(2+) as cofactor.

It localises to the cytoplasm. The enzyme catalyses oxaloacetate + ATP = phosphoenolpyruvate + ADP + CO2. Its pathway is carbohydrate biosynthesis; gluconeogenesis. In terms of biological role, involved in the gluconeogenesis. Catalyzes the conversion of oxaloacetate (OAA) to phosphoenolpyruvate (PEP) through direct phosphoryl transfer between the nucleoside triphosphate and OAA. This chain is Phosphoenolpyruvate carboxykinase (ATP), found in Brevibacillus brevis (strain 47 / JCM 6285 / NBRC 100599).